The sequence spans 430 residues: MYKVYEKIESINGSVITVRAKGVHYGELARVKTAFGDSLAEVNKLEGDVVSLQVFAGGRGISTGSEVRFLGRGMLVSFSDYLLGRIFNGSGVPRDGGPALKEGRVEIGGPSVNPAKRVIARRMIRTGIPMIDVFNTLVVSQKLPIFSSSGEPYNELLARIAMQAEVDVIVLGGMGLKHDDYLYFKSALEEAGALSRAVLFVHTASDPTVECLMVPDMCLAVAEQFALKGRDVLVLLTDMTNFADAMKEIAIIQEQVPSNRGYPGDLYSQLASRYEKAVDFDDAGSVTILAVTTMPGDDVTHPVPDNTGYITEGQFYLKNGRIEPFGSLSRLKQNVNGRTRADHRALMDNMIKLYAAYRDALEKRSMGFAMSEWDEKLLTYGGLFEAQLMDLSVNIPLEEAFDTGWKILGRCFTPEETGIRSDLINTYWPA.

The protein belongs to the ATPase alpha/beta chains family.

Functionally, produces ATP from ADP in the presence of a proton gradient across the membrane. The V-type beta chain is a regulatory subunit. The chain is V-type ATP synthase beta chain 1 (atpB1) from Treponema pallidum (strain Nichols).